The sequence spans 404 residues: MTQTVKKVVVAYSGGLDTSVILPWLQENYDNCEIVALFVADVGQGAEELEGIEAKALASGASECYVVDLKDELVENYIYPTLKTGAVYEGTYLLGTSMARQSIAKAQVEIARKVGADALCHGCTGKGNDQIRFESCFAALAPELTVIAPWRIWDLTSRESLLEYLAERDIPTAASGTKIYSRDANAWHISHEGGELEDPWNQPSKQVWTMTVDPIDAPNEPEFLTISVVKGEITAVNGEEMYLIIRYTYLNEKAAAHGVGRVDIVENRLVGMKSRGCYETPGGTVMVEALRGIEELVLDKITRKWKHTVAAEFSHLVYDGRWFTPLCASLLAAAGTLAEEMNGEVIVKMYKGSVQAVQKQSPNSLYSEEFATFGDDNVYDDQSHAEGFIRLYSLSSRIKALASK.

Residues 11–19 (AYSGGLDTS) and alanine 40 contribute to the ATP site. L-citrulline-binding residues include tyrosine 92 and serine 97. Glycine 122 is a binding site for ATP. Residues threonine 124, asparagine 128, and aspartate 129 each contribute to the L-aspartate site. Position 128 (asparagine 128) interacts with L-citrulline. L-citrulline contacts are provided by arginine 132, serine 181, serine 190, glutamate 266, and tyrosine 278.

Belongs to the argininosuccinate synthase family. Type 1 subfamily. As to quaternary structure, homotetramer.

Its subcellular location is the cytoplasm. The catalysed reaction is L-citrulline + L-aspartate + ATP = 2-(N(omega)-L-arginino)succinate + AMP + diphosphate + H(+). Its pathway is amino-acid biosynthesis; L-arginine biosynthesis; L-arginine from L-ornithine and carbamoyl phosphate: step 2/3. This is Argininosuccinate synthase from Moritella abyssi.